The primary structure comprises 280 residues: Urease accessory protein UreD 1 (280 aa).

It belongs to the UreD family. As to quaternary structure, ureD, UreF and UreG form a complex that acts as a GTP-hydrolysis-dependent molecular chaperone, activating the urease apoprotein by helping to assemble the nickel containing metallocenter of UreC. The UreE protein probably delivers the nickel.

The protein localises to the cytoplasm. In terms of biological role, required for maturation of urease via the functional incorporation of the urease nickel metallocenter. The chain is Urease accessory protein UreD 1 from Brucella melitensis biotype 1 (strain ATCC 23456 / CCUG 17765 / NCTC 10094 / 16M).